Reading from the N-terminus, the 135-residue chain is Salivary protein 15 Iper-1 (135 aa).

The first 22 residues, Met1–Ala22, serve as a signal peptide directing secretion. 2 N-linked (GlcNAc...) asparagine glycosylation sites follow: Asn93 and Asn104. Positions Gly116 to Cys135 are CD4-binding.

The protein belongs to the salp15 family. Interacts with host CD4. Interacts with host DC-SIGN (CD209). As to quaternary structure, (Microbial infection) Interacts with Borrelia outer surface protein C (OspC). Expressed in salivary glands from feeding female ticks. Highly expressed 4 days after start of feeding.

The protein localises to the secreted. Salivary tick protein that downregulates host immune system by binding to both dendritic cells, and CD4(+) T cells. Specifically binds to the CD4 coreceptor on T cells. This interaction prevents the activation of the Src kinase, Lck, and its downstream substrate Zap-70, and results in deficient activation of PLCgamma1, the repression of calcium fluxes triggered by T-cell antigen receptor (TCR) ligation, and a subsequent reduction in interleukin-2 production. This salivary protein also binds to DC-SIGN (CD209) on dendritic cells (DC) and activates the Raf-1 kinase/MEK signaling pathway that results in down-regulating expression of pro-inflammatory cytokines. Furthermore, it inhibits T cell proliferation induced by DCs. It also inhibits in vitro keratinocyte inflammation induced by Borrelia burgdorferi or by the major outer surface protein (OspC) of Borrelia. In addition, it downregulates chemokines and monocyte chemoattractant protein 1, as well as several antimicrobial peptides such as defensins, cathelicidin, psoriasin, and RNase 7. Apart from its immunomodulatory activities, it is also associated with protection of Borrelia spirochetes from antibody-mediated killing through its binding to OspC. In vivo, tests on different immune disease animal models show promising therapeutic results, e.g., in inhibiting HIV infection, experimental autoimmune encephalomyelitis, transplantation rejection, and asthma. Its function is as follows. (Microbial infection) Protects Borrelia garinii from anti-Borrelia antibody-mediated cytotoxicity in vitro. May facilitate B.garinii transmission in mouse model. In terms of biological role, (Microbial infection) Protects Borrelia burgdorferi from anti-Borrelia antibody-mediated cytotoxicity in vitro. Functionally, (Microbial infection) Protects Borrelia afzelii from anti-Borrelia antibody-mediated cytotoxicity in vitro. The chain is Salivary protein 15 Iper-1 from Ixodes persulcatus (Taiga tick).